Reading from the N-terminus, the 111-residue chain is Phosphoribosyl-ATP pyrophosphatase (111 aa).

The protein belongs to the PRA-PH family.

It is found in the cytoplasm. It catalyses the reaction 1-(5-phospho-beta-D-ribosyl)-ATP + H2O = 1-(5-phospho-beta-D-ribosyl)-5'-AMP + diphosphate + H(+). Its pathway is amino-acid biosynthesis; L-histidine biosynthesis; L-histidine from 5-phospho-alpha-D-ribose 1-diphosphate: step 2/9. This Pseudomonas aeruginosa (strain ATCC 15692 / DSM 22644 / CIP 104116 / JCM 14847 / LMG 12228 / 1C / PRS 101 / PAO1) protein is Phosphoribosyl-ATP pyrophosphatase (hisE).